A 516-amino-acid polypeptide reads, in one-letter code: uncharacterized protein (516 aa).

A signal peptide spans 1 to 22 (MLYRFWKTGLAIFMPGCILLSS). Residue Cys23 is the site of N-palmitoyl cysteine attachment. A lipid anchor (S-diacylglycerol cysteine) is attached at Cys23.

The protein belongs to the MG067/MG068/MG395 family.

The protein localises to the cell membrane. This is an uncharacterized protein from Mycoplasma genitalium (strain ATCC 33530 / DSM 19775 / NCTC 10195 / G37) (Mycoplasmoides genitalium).